The sequence spans 355 residues: Protein HGH1 homolog (355 aa).

A disordered region spans residues 324–355; sequence DEEGDPTPEEIEQMNKKQKLEDEDAQFETDEI. Composition is skewed to acidic residues over residues 325 to 335 and 344 to 355; these read EEGDPTPEEIE and EDEDAQFETDEI.

This sequence belongs to the HGH1 family.

The sequence is that of Protein HGH1 homolog from Dictyostelium discoideum (Social amoeba).